The following is a 129-amino-acid chain: 3-aminoacrylate deaminase RutC (129 aa).

The protein belongs to the RutC family.

The catalysed reaction is (Z)-3-aminoacrylate + H2O + H(+) = 3-oxopropanoate + NH4(+). Functionally, involved in pyrimidine catabolism. Catalyzes the deamination of 3-aminoacrylate to malonic semialdehyde, a reaction that can also occur spontaneously. RutC may facilitate the reaction and modulate the metabolic fitness, rather than catalyzing essential functions. This is 3-aminoacrylate deaminase RutC from Rhizobium rhizogenes (strain K84 / ATCC BAA-868) (Agrobacterium radiobacter).